The chain runs to 690 residues: Proprotein convertase subtilisin/kexin type 9 (690 aa).

An N-terminal signal peptide occupies residues 1–28; it reads MGTVSSRRLWWPLPLLLLLLLGPTGTRA. Positions 29 to 150 are excised as a propeptide; the sequence is QEEDDDDYEE…IEEDSSVFAQ (122 aa). Tyr36 is subject to Sulfotyrosine. Residue Ser45 is modified to Phosphoserine. Residues 75 to 147 enclose the Inhibitor I9 domain; the sequence is TYVVVLKEET…VDYIEEDSSV (73 aa). The 307-residue stretch at 153–459 folds into the Peptidase S8 domain; sequence PWNLERITPA…GWQLFCRTVW (307 aa). Residues Asp184 and His224 each act as charge relay system in the active site. 2 cysteine pairs are disulfide-bonded: Cys221-Cys253 and Cys321-Cys356. Ser384 serves as the catalytic Charge relay system. The C-terminal domain stretch occupies residues 448–690; that stretch reads GAGWQLFCRT…HLAQASQELQ (243 aa). 3 disulfide bridges follow: Cys455/Cys525, Cys475/Cys524, and Cys484/Cys507. Asn531 carries N-linked (GlcNAc...) asparagine glycosylation. Cystine bridges form between Cys532–Cys599, Cys550–Cys598, Cys560–Cys586, Cys606–Cys677, Cys624–Cys676, and Cys633–Cys652. The residue at position 686 (Ser686) is a Phosphoserine.

The protein belongs to the peptidase S8 family. In terms of assembly, monomer. Can self-associate to form dimers and higher multimers which may have increased LDLR degrading activity. The precursor protein but not the mature protein may form multimers. Interacts with APOB, VLDLR, LRP8/APOER2 and BACE1. The full-length immature form (pro-PCSK9) interacts with SCNN1A, SCNN1B and SCNN1G. The pro-PCSK9 form (via C-terminal domain) interacts with LDLR. Interacts (via the C-terminal domain) with ANXA2 (via repeat Annexin 1); the interaction inhibits the degradation of LDLR. It depends on Ca(2+) as a cofactor. In terms of processing, cleavage by furin and PCSK5 generates a truncated inactive protein that is unable to induce LDLR degradation. Post-translationally, undergoes autocatalytic cleavage in the endoplasmic reticulum to release the propeptide from the N-terminus and the cleavage of the propeptide is strictly required for its maturation and activation. The cleaved propeptide however remains associated with the catalytic domain through non-covalent interactions, preventing potential substrates from accessing its active site. As a result, it is secreted from cells as a propeptide-containing, enzymatically inactive protein. Phosphorylation protects the propeptide against proteolysis.

It localises to the cytoplasm. The protein resides in the secreted. The protein localises to the endosome. It is found in the lysosome. Its subcellular location is the cell surface. It localises to the endoplasmic reticulum. The protein resides in the golgi apparatus. With respect to regulation, its proteolytic activity is autoinhibited by the non-covalent binding of the propeptide to the catalytic domain. Inhibited by EGTA. In terms of biological role, crucial player in the regulation of plasma cholesterol homeostasis. Binds to low-density lipid receptor family members: low density lipoprotein receptor (LDLR), very low density lipoprotein receptor (VLDLR), apolipoprotein E receptor (LRP1/APOER) and apolipoprotein receptor 2 (LRP8/APOER2), and promotes their degradation in intracellular acidic compartments. Acts via a non-proteolytic mechanism to enhance the degradation of the hepatic LDLR through a clathrin LDLRAP1/ARH-mediated pathway. May prevent the recycling of LDLR from endosomes to the cell surface or direct it to lysosomes for degradation. Can induce ubiquitination of LDLR leading to its subsequent degradation. Inhibits intracellular degradation of APOB via the autophagosome/lysosome pathway in a LDLR-independent manner. Involved in the disposal of non-acetylated intermediates of BACE1 in the early secretory pathway. Inhibits epithelial Na(+) channel (ENaC)-mediated Na(+) absorption by reducing ENaC surface expression primarily by increasing its proteasomal degradation. Regulates neuronal apoptosis via modulation of LRP8/APOER2 levels and related anti-apoptotic signaling pathways. The sequence is that of Proprotein convertase subtilisin/kexin type 9 (PCSK9) from Callithrix jacchus (White-tufted-ear marmoset).